The following is a 292-amino-acid chain: Homoserine kinase (292 aa).

84–94 is a binding site for ATP; that stretch reads PLSRGLGSSSA.

Belongs to the GHMP kinase family. Homoserine kinase subfamily.

It is found in the cytoplasm. The catalysed reaction is L-homoserine + ATP = O-phospho-L-homoserine + ADP + H(+). The protein operates within amino-acid biosynthesis; L-threonine biosynthesis; L-threonine from L-aspartate: step 4/5. Its function is as follows. Catalyzes the ATP-dependent phosphorylation of L-homoserine to L-homoserine phosphate. In Campylobacter jejuni subsp. jejuni serotype O:6 (strain 81116 / NCTC 11828), this protein is Homoserine kinase.